Consider the following 677-residue polypeptide: Sulfate transporter 2.2 (677 aa).

Over 1–110 (MQLSSLSHTS…QYKLNLFKKD (110 aa)) the chain is Cytoplasmic. Residues 111–131 (LMAGLTLASLCIPQSIGYANL) traverse the membrane as a helical segment. Residues 132–133 (AG) lie on the Extracellular side of the membrane. A helical transmembrane segment spans residues 134-154 (LDPEYGLYTSVVPPLIYSTMG). Residues 155–158 (TSRE) lie on the Cytoplasmic side of the membrane. Residues 159 to 179 (LAIGPVAVVSLLLSSMVRDLQ) traverse the membrane as a helical segment. Residues 180-190 (DPVTDPIAYRK) are Extracellular-facing. Residues 191–211 (IVFTVTFFAGAFQAIFGLFRL) form a helical membrane-spanning segment. Topologically, residues 212-213 (GF) are cytoplasmic. Residues 214–234 (LVDFLSHAALVGFMAGAAIVI) traverse the membrane as a helical segment. Over 235–270 (GLQQLKGLFGLTHFTNKTDVVSVLSSVFHSLHHPWQ) the chain is Extracellular. A glycan (N-linked (GlcNAc...) asparagine) is linked at Asn250. Residues 271–291 (PLNFVIGSSFLIFILLARFIG) traverse the membrane as a helical segment. At 292–296 (KRNNK) the chain is on the cytoplasmic side. A helical transmembrane segment spans residues 297 to 317 (LFWIPAMAPLISVVLATLIVY). Residues 318-352 (LSNAESRGVKIVKHIKPGFNQLSVNQLQFKSPHLG) are Extracellular-facing. A helical transmembrane segment spans residues 353 to 373 (QIAKIGLISAIIALTEAIAVG). At 374–389 (RSFATIKGYRLDGNKE) the chain is on the cytoplasmic side. Residues 390–410 (MMAMGFMNIAGSLSSCYVATG) traverse the membrane as a helical segment. The Extracellular portion of the chain corresponds to 411 to 422 (SFSRTAVNFSAG). Asn418 carries an N-linked (GlcNAc...) asparagine glycan. The chain crosses the membrane as a helical span at residues 423–443 (CETVVSNIVMAITVMISLEVL). The Cytoplasmic segment spans residues 444–446 (TRF). The helical transmembrane segment at 447 to 467 (LYFTPTAILASIILSALPGLI) threads the bilayer. The Extracellular segment spans residues 468-482 (DVSGALHIWKLDKLD). The helical transmembrane segment at 483-503 (FLVLIAAFFGVLFASVEIGLL) threads the bilayer. At 504–677 (LAVGISFARI…RARSTSHELC (174 aa)) the chain is on the cytoplasmic side. In terms of domain architecture, STAS spans 540 to 666 (YPMANKTAGL…MTVGEAVDIY (127 aa)).

It belongs to the SLC26A/SulP transporter (TC 2.A.53) family. In terms of tissue distribution, expressed in the phloem in roots and in the phloem of vascular bundles in leaves.

The protein localises to the membrane. Low-affinity H(+)/sulfate cotransporter that may be involved in the distribution of sulfate from vascular bundles to the palisade cells of the leaves. Plays a central role in the regulation of sulfate assimilation. This Arabidopsis thaliana (Mouse-ear cress) protein is Sulfate transporter 2.2 (SULTR2;2).